Consider the following 360-residue polypeptide: Phosphoserine aminotransferase (360 aa).

Arg-42 is a binding site for L-glutamate. Pyridoxal 5'-phosphate is bound by residues Ala-76–Arg-77, Trp-102, Thr-153, Asp-172, and Gln-195. Lys-196 is modified (N6-(pyridoxal phosphate)lysine). Asn-237–Thr-238 lines the pyridoxal 5'-phosphate pocket.

The protein belongs to the class-V pyridoxal-phosphate-dependent aminotransferase family. SerC subfamily. In terms of assembly, homodimer. Pyridoxal 5'-phosphate is required as a cofactor.

It is found in the cytoplasm. The catalysed reaction is O-phospho-L-serine + 2-oxoglutarate = 3-phosphooxypyruvate + L-glutamate. It carries out the reaction 4-(phosphooxy)-L-threonine + 2-oxoglutarate = (R)-3-hydroxy-2-oxo-4-phosphooxybutanoate + L-glutamate. The protein operates within amino-acid biosynthesis; L-serine biosynthesis; L-serine from 3-phospho-D-glycerate: step 2/3. It participates in cofactor biosynthesis; pyridoxine 5'-phosphate biosynthesis; pyridoxine 5'-phosphate from D-erythrose 4-phosphate: step 3/5. Catalyzes the reversible conversion of 3-phosphohydroxypyruvate to phosphoserine and of 3-hydroxy-2-oxo-4-phosphonooxybutanoate to phosphohydroxythreonine. The chain is Phosphoserine aminotransferase from Aliivibrio fischeri (strain ATCC 700601 / ES114) (Vibrio fischeri).